The chain runs to 107 residues: Replication initiation control protein YabA (107 aa).

Residues histidine 81, cysteine 83, cysteine 97, and cysteine 100 each contribute to the Zn(2+) site.

This sequence belongs to the YabA family. As to quaternary structure, homotetramer. Interacts with both DnaA and DnaN, acting as a bridge between these two proteins. Zn(2+) is required as a cofactor.

The protein localises to the cytoplasm. Its subcellular location is the nucleoid. Functionally, involved in control of chromosome replication initiation. Inhibits the cooperative binding of DnaA to the oriC region, thus negatively regulating initiation of chromosome replication. Inhibits the ability of DnaA-ATP to form a helix on DNA; does not disassemble preformed DnaA-DNA helices. Decreases the residence time of DnaA on the chromosome at its binding sites (oriC, replication forks and promoter-binding sites). Tethers DnaA to the replication machinery via the DNA polymerase beta sliding clamp subunit (dnaN). Associates with oriC and other DnaA targets on the chromosome in a DnaA-dependent manner. This chain is Replication initiation control protein YabA, found in Streptococcus equi subsp. equi (strain 4047).